The following is a 355-amino-acid chain: Spore germination protein XB (355 aa).

The next 10 helical transmembrane spans lie at 2–24 (VNFF…VIII), 34–56 (DSWI…VFIV), 69–91 (LMRN…YLII), 106–128 (FYLP…FYNI), 135–157 (IALT…MIAN), 180–197 (GMIY…ILFL), 210–232 (LIIV…IVEF), 265–287 (VYQW…PDVL), 299–321 (ISIL…SFYW), and 326–348 (VFLP…FVWV).

This sequence belongs to the amino acid-polyamine-organocation (APC) superfamily. Spore germination protein (SGP) (TC 2.A.3.9) family.

Its subcellular location is the cell membrane. In terms of biological role, may allow B.anthracis to germinate within phagocytic cells and therefore involved in virulence. The protein is Spore germination protein XB (gerXB) of Bacillus anthracis.